Reading from the N-terminus, the 473-residue chain is Levansucrase (473 aa).

The first 29 residues, 1–29, serve as a signal peptide directing secretion; it reads MNIKKFAKQATVLTFTTALLAGGATQAFA. Sucrose is bound by residues Trp-85, Asp-86, and Ser-164. Catalysis depends on Asp-86, which acts as the Nucleophile. Residue Asp-241 coordinates Ca(2+). 2 residues coordinate sucrose: Arg-246 and Asp-247. Residues Gln-272, Leu-308, Asn-310, and Asp-339 each contribute to the Ca(2+) site. Glu-340 is a sucrose binding site. Glu-342 acts as the Proton donor/acceptor in catalysis. Position 360 (Arg-360) interacts with sucrose.

Belongs to the glycosyl hydrolase 68 family. As to quaternary structure, monomer.

The protein resides in the secreted. The catalysed reaction is [6)-beta-D-fructofuranosyl-(2-&gt;](n) alpha-D-glucopyranoside + sucrose = [6)-beta-D-fructofuranosyl-(2-&gt;](n+1) alpha-D-glucopyranoside + D-glucose. Its activity is regulated as follows. Ca(2+) may play an important structural role and promote stability of levansucrase. The enzyme concentration is a factor defining the molecular weight (MW) levan distribution. A bimodal distribution is reported at the usual enzyme concentrations. At low concentrations, the enzyme synthesizes high MW levan, and at high concentrations, it synthesizes low MW levan. In terms of biological role, catalyzes the synthesis of levan, a fructose polymer, by transferring the fructosyl moiety from sucrose to a growing acceptor molecule. Also displays sucrose hydrolase activity. At low sucrose concentrations, functions as an hydrolase with water as acceptor, whereas at higher substrate concentrations it adds fructosyl units to a growing levan chain. The polypeptide is Levansucrase (Bacillus subtilis (strain 168)).